We begin with the raw amino-acid sequence, 124 residues long: Ubiquinol-cytochrome-c reductase complex assembly factor 2 (124 aa).

Residues 1 to 13 (MASLRYRRFLKLC) constitute a mitochondrion transit peptide.

The protein resides in the mitochondrion matrix. The protein localises to the mitochondrion nucleoid. It is found in the mitochondrion. Its function is as follows. Required for the assembly of the ubiquinol-cytochrome c reductase complex (mitochondrial respiratory chain complex III or cytochrome b-c1 complex). May play a role in the modulation of respiratory chain activities such as oxygen consumption and ATP production. May be involved in cytochrome b translation and/or stability. This chain is Ubiquinol-cytochrome-c reductase complex assembly factor 2 (uqcc2), found in Xenopus tropicalis (Western clawed frog).